The chain runs to 268 residues: Small ribosomal subunit protein eS1 (268 aa).

The tract at residues 1-21 (MAVGKNKGLSKGGKKGGKKKV) is disordered.

It belongs to the eukaryotic ribosomal protein eS1 family. Component of the small ribosomal subunit. Mature ribosomes consist of a small (40S) and a large (60S) subunit. The 40S subunit contains about 33 different proteins and 1 molecule of RNA (18S). The 60S subunit contains about 49 different proteins and 3 molecules of RNA (28S, 5.8S and 5S).

The protein localises to the cytoplasm. Functionally, essential for oogenesis; required for late follicle cell development. The chain is Small ribosomal subunit protein eS1 from Drosophila erecta (Fruit fly).